Reading from the N-terminus, the 284-residue chain is Shikimate dehydrogenase (NADP(+)) (284 aa).

Shikimate is bound by residues 20 to 22 (SIS) and S67. K71 functions as the Proton acceptor in the catalytic mechanism. D83 contacts NADP(+). Shikimate-binding residues include N92 and D107. NADP(+) is bound by residues 129 to 133 (GAGGA) and I227. Position 229 (Y229) interacts with shikimate. Residue G250 coordinates NADP(+).

The protein belongs to the shikimate dehydrogenase family. As to quaternary structure, homodimer.

It carries out the reaction shikimate + NADP(+) = 3-dehydroshikimate + NADPH + H(+). It participates in metabolic intermediate biosynthesis; chorismate biosynthesis; chorismate from D-erythrose 4-phosphate and phosphoenolpyruvate: step 4/7. In terms of biological role, involved in the biosynthesis of the chorismate, which leads to the biosynthesis of aromatic amino acids. Catalyzes the reversible NADPH linked reduction of 3-dehydroshikimate (DHSA) to yield shikimate (SA). This is Shikimate dehydrogenase (NADP(+)) from Streptococcus pneumoniae (strain P1031).